The primary structure comprises 212 residues: Probable chemoreceptor glutamine deamidase CheD (212 aa).

This sequence belongs to the CheD family.

It catalyses the reaction L-glutaminyl-[protein] + H2O = L-glutamyl-[protein] + NH4(+). Functionally, probably deamidates glutamine residues to glutamate on methyl-accepting chemotaxis receptors (MCPs), playing an important role in chemotaxis. This is Probable chemoreceptor glutamine deamidase CheD from Oleidesulfovibrio alaskensis (strain ATCC BAA-1058 / DSM 17464 / G20) (Desulfovibrio alaskensis).